The primary structure comprises 411 residues: SKA complex subunit 3 (411 aa).

A phosphoserine mark is found at Ser34, Ser119, Ser138, Ser154, and Ser158. A binds the NDC80 complex region spans residues 102–410 (YQARDKEDSG…GTRGAANKEN (309 aa)). 2 positions are modified to phosphothreonine: Thr189 and Thr216. A binds microtubules and contacts the microtubule-binding domain of SKA1 region spans residues 195-410 (PSVQVLKTPR…GTRGAANKEN (216 aa)). At Ser289 the chain carries Phosphoserine. Thr297 carries the post-translational modification Phosphothreonine. A phosphoserine mark is found at Ser324 and Ser352. Residues 349–410 (EPPSSAITSC…GTRGAANKEN (62 aa)) are required for localization to kinetochores. Thr363 carries the post-translational modification Phosphothreonine.

It belongs to the SKA3 family. Component of the SKA complex, composed of SKA1, SKA2 and SKA3. The SKA complex is a homodimer organized around a central W-shaped coiled-coil structure, formed by the interacting domains of SKA1, SKA2, and SKA3, each end of the 'W' is extended further by the C-terminal microtubule-binding domains of SKA1 and SKA3; the complex forms extended structures on microtubules. Interacts with the NDC80-NUF2 heterodimer of the NDC80 complex (via coiled coils); the interaction localizes the SKA complex to the kinetochore and is required to establish kinetochore-microtubule end-on attachments. Interacts with polo-like kinase PLK1.

Its subcellular location is the cytoplasm. It localises to the cytoskeleton. The protein localises to the spindle. The protein resides in the chromosome. It is found in the centromere. Its subcellular location is the kinetochore. It localises to the microtubule organizing center. The protein localises to the centrosome. Functionally, component of the SKA complex, a microtubule plus end-binding complex of the outer kinetochore that stabilizes spindle microtubule-kinetochore attachments, promotes alignment of chromosomes at the mitotic spindle equator (chromosome congression) and assists suppression of the spindle assembly checkpoint. Kinetochores, consisting of a centromere-associated inner segment and a microtubule-contacting outer segment, play a crucial role in chromosome segregation by mediating the physical connection between centromeric DNA and spindle microtubules. The outer kinetochore is made up of the ten-subunit KMN network complex, comprising the MIS12, NDC80 and KNL1 complexes, and auxiliary microtubule-associated components such as the SKA complex; together they connect the outer kinetochore with the inner kinetochore, bind microtubules, and mediate interactions with mitotic checkpoint proteins that delay anaphase until chromosomes are bioriented on the spindle. The SKA complex is loaded onto bioriented kinetochores and it facilitates chromosome congression by stabilizing microtubules together with MAPRE1, and end-on attachment of the NDC80 complex to depolymerizing spindle microtubules, thereby assisting the poleward-moving kinetochore in withstanding microtubule pulling forces. The complex associates with dynamic microtubule plus-ends and can track both depolymerizing and elongating microtubules. The complex recruits protein phosphatase 1 (PP1) to the kinetochore in prometaphase and metaphase, to oppose spindle assembly checkpoint signaling and promote the onset of anaphase. Within the complex, binds microtubules but with a much lower affinity than SKA1. Promotes stability of the polo-like kinase PLK1 protein. During meiosis the SKA complex stabilizes the meiotic spindle and is required for its migration to the cortex. The polypeptide is SKA complex subunit 3 (Ska3) (Mus musculus (Mouse)).